A 230-amino-acid polypeptide reads, in one-letter code: Dephospho-CoA kinase (230 aa).

Residues 1–20 form a disordered region; that stretch reads MSKYAAIPSPYSHQPQAPDH. The DPCK domain occupies 26–225; sequence VVGLTGGIGS…QDYLKLAQQL (200 aa). 34 to 39 is a binding site for ATP; sequence GSGKSA.

This sequence belongs to the CoaE family.

It localises to the cytoplasm. The enzyme catalyses 3'-dephospho-CoA + ATP = ADP + CoA + H(+). The protein operates within cofactor biosynthesis; coenzyme A biosynthesis; CoA from (R)-pantothenate: step 5/5. Catalyzes the phosphorylation of the 3'-hydroxyl group of dephosphocoenzyme A to form coenzyme A. This Psychrobacter arcticus (strain DSM 17307 / VKM B-2377 / 273-4) protein is Dephospho-CoA kinase.